A 765-amino-acid polypeptide reads, in one-letter code: 5-methyltetrahydropteroyltriglutamate--homocysteine methyltransferase (765 aa).

5-methyltetrahydropteroyltri-L-glutamate contacts are provided by residues 16–19 (RELK) and lysine 121. L-homocysteine contacts are provided by residues 441–443 (IGS) and glutamate 494. L-methionine contacts are provided by residues 441–443 (IGS) and glutamate 494. 5-methyltetrahydropteroyltri-L-glutamate-binding positions include 525–526 (RC) and tryptophan 571. Aspartate 609 contacts L-homocysteine. Residue aspartate 609 coordinates L-methionine. Glutamate 615 is a 5-methyltetrahydropteroyltri-L-glutamate binding site. Histidine 651, cysteine 653, and glutamate 675 together coordinate Zn(2+). Histidine 704 (proton donor) is an active-site residue. Cysteine 736 serves as a coordination point for Zn(2+).

This sequence belongs to the vitamin-B12 independent methionine synthase family. The cofactor is Zn(2+).

It catalyses the reaction 5-methyltetrahydropteroyltri-L-glutamate + L-homocysteine = tetrahydropteroyltri-L-glutamate + L-methionine. It functions in the pathway amino-acid biosynthesis; L-methionine biosynthesis via de novo pathway; L-methionine from L-homocysteine (MetE route): step 1/1. Its function is as follows. Catalyzes the transfer of a methyl group from 5-methyltetrahydrofolate to homocysteine resulting in methionine formation. The chain is 5-methyltetrahydropteroyltriglutamate--homocysteine methyltransferase from Saccharophagus degradans (strain 2-40 / ATCC 43961 / DSM 17024).